A 541-amino-acid polypeptide reads, in one-letter code: Glucose-6-phosphate isomerase (541 aa).

The active-site Proton donor is the Glu-346. Active-site residues include His-377 and Lys-506.

Belongs to the GPI family.

The protein resides in the cytoplasm. The catalysed reaction is alpha-D-glucose 6-phosphate = beta-D-fructose 6-phosphate. It functions in the pathway carbohydrate biosynthesis; gluconeogenesis. Its pathway is carbohydrate degradation; glycolysis; D-glyceraldehyde 3-phosphate and glycerone phosphate from D-glucose: step 2/4. In terms of biological role, catalyzes the reversible isomerization of glucose-6-phosphate to fructose-6-phosphate. The polypeptide is Glucose-6-phosphate isomerase (Rhizobium johnstonii (strain DSM 114642 / LMG 32736 / 3841) (Rhizobium leguminosarum bv. viciae)).